Consider the following 361-residue polypeptide: Tyrosine--tRNA ligase (361 aa).

Residues Tyr-36, Tyr-162, Gln-166, Asp-169, and Gln-184 each contribute to the L-tyrosine site. Positions 236–240 match the 'KMSKS' region motif; it reads KMSKS. An ATP-binding site is contributed by Lys-239.

This sequence belongs to the class-I aminoacyl-tRNA synthetase family. TyrS type 4 subfamily. Homodimer.

The protein resides in the cytoplasm. The enzyme catalyses tRNA(Tyr) + L-tyrosine + ATP = L-tyrosyl-tRNA(Tyr) + AMP + diphosphate + H(+). Functionally, catalyzes the attachment of tyrosine to tRNA(Tyr) in a two-step reaction: tyrosine is first activated by ATP to form Tyr-AMP and then transferred to the acceptor end of tRNA(Tyr). This is Tyrosine--tRNA ligase from Saccharolobus islandicus (strain L.S.2.15 / Lassen #1) (Sulfolobus islandicus).